The primary structure comprises 102 residues: Putative pterin-4-alpha-carbinolamine dehydratase (102 aa).

It belongs to the pterin-4-alpha-carbinolamine dehydratase family.

It catalyses the reaction (4aS,6R)-4a-hydroxy-L-erythro-5,6,7,8-tetrahydrobiopterin = (6R)-L-erythro-6,7-dihydrobiopterin + H2O. In Psychromonas ingrahamii (strain DSM 17664 / CCUG 51855 / 37), this protein is Putative pterin-4-alpha-carbinolamine dehydratase.